We begin with the raw amino-acid sequence, 340 residues long: Putative UPF0607 protein ENSP00000332738 (340 aa).

The span at 75 to 90 (VRAEEPKEATEVKDQV) shows a compositional bias: basic and acidic residues. 2 disordered regions span residues 75-130 (VRAE…NPRP) and 215-281 (GLLM…KLPC). A compositionally biased stretch (polar residues) spans 91-126 (ETQGQEDNKTGPCSNGKAASTSRPLETQGNLTSSWY). Over residues 228-241 (PAALRSSRSSPPRA) the composition is skewed to low complexity. Residues 242–251 (AGHRPRKRKL) are compositionally biased toward basic residues. The span at 254-266 (PPLQLQQTPPLQL) shows a compositional bias: low complexity.

It belongs to the UPF0607 family.

This is Putative UPF0607 protein ENSP00000332738 from Homo sapiens (Human).